The sequence spans 105 residues: Large ribosomal subunit protein eL36 (105 aa).

Residues 1–20 (MAKEAPAKTGLAVGLNKGHK) form a disordered region.

This sequence belongs to the eukaryotic ribosomal protein eL36 family.

The polypeptide is Large ribosomal subunit protein eL36 (rpl36) (Trichoderma hamatum).